Reading from the N-terminus, the 244-residue chain is NAD(P)H-quinone oxidoreductase subunit K (244 aa).

Residues cysteine 60, cysteine 61, cysteine 125, and cysteine 156 each contribute to the [4Fe-4S] cluster site.

This sequence belongs to the complex I 20 kDa subunit family. NDH-1 can be composed of about 15 different subunits; different subcomplexes with different compositions have been identified which probably have different functions. It depends on [4Fe-4S] cluster as a cofactor.

Its subcellular location is the cellular thylakoid membrane. It carries out the reaction a plastoquinone + NADH + (n+1) H(+)(in) = a plastoquinol + NAD(+) + n H(+)(out). It catalyses the reaction a plastoquinone + NADPH + (n+1) H(+)(in) = a plastoquinol + NADP(+) + n H(+)(out). Functionally, NDH-1 shuttles electrons from an unknown electron donor, via FMN and iron-sulfur (Fe-S) centers, to quinones in the respiratory and/or the photosynthetic chain. The immediate electron acceptor for the enzyme in this species is believed to be plastoquinone. Couples the redox reaction to proton translocation, and thus conserves the redox energy in a proton gradient. Cyanobacterial NDH-1 also plays a role in inorganic carbon-concentration. This chain is NAD(P)H-quinone oxidoreductase subunit K, found in Prochlorococcus marinus (strain MIT 9515).